The chain runs to 482 residues: Lipoamide acyltransferase component of branched-chain alpha-keto acid dehydrogenase complex, mitochondrial (482 aa).

The N-terminal 61 residues, 1–61 (MAAARVLRTW…HSLRTAAVLQ (61 aa)), are a transit peptide targeting the mitochondrion. Positions 64-139 (VVQFKLSDIG…YVGKPLIDIE (76 aa)) constitute a Lipoyl-binding domain. Residue lysine 105 is modified to N6-lipoyllysine. N6-succinyllysine is present on lysine 133. The interval 145–160 (DSEEDVVETPAVSHDE) is critical for association with PPM1K. Residues 172-209 (LATPAVRRLAMENNIKLSEVVGSGKDGRILKEDILSFL) enclose the Peripheral subunit-binding (PSBD) domain. Lysine 196 carries the post-translational modification N6-acetyllysine; alternate. At lysine 196 the chain carries N6-succinyllysine; alternate. An N6-acetyllysine modification is found at lysine 202. The disordered stretch occupies residues 217 to 252 (LPPSPKSEITPPPPQPKDRTFPTPIAKPPVFTGKDR). Residues 218–231 (PPSPKSEITPPPPQ) show a composition bias toward pro residues. Serine 220 carries the phosphoserine modification. Residues lysine 243 and lysine 250 each carry the N6-acetyllysine modification. Lysine 261 carries the N6-succinyllysine modification. An N6-acetyllysine; alternate modification is found at lysine 289. Position 289 is an N6-succinyllysine; alternate (lysine 289). Arginine 291 contributes to the CoA binding site. An N6-acetyllysine mark is found at lysine 295 and lysine 304. Serine 306, aspartate 349, glutamine 378, serine 399, asparagine 400, serine 403, glycine 424, and isoleucine 426 together coordinate CoA. At lysine 435 the chain carries N6-acetyllysine. Lysine 440 is subject to N6-acetyllysine; alternate. N6-succinyllysine; alternate is present on lysine 440. Active-site residues include histidine 452 and aspartate 456.

Belongs to the 2-oxoacid dehydrogenase family. As to quaternary structure, forms a 24-polypeptide structural core with octahedral symmetry that represents the E2 component of the branched-chain alpha-ketoacid dehydrogenase (BCKDH) complex. The BCKDH complex is composed of three major building blocks E1, E2 and E3. It is organized around E2, a 24-meric cubic core composed of DBT, to which are associated 6 to 12 copies of E1, and approximately 6 copies of the dehydrogenase E3, a DLD dimer. Interacts with PPM1K with a 24:1 stoichiometry; the N-terminal region (residues 49-61) of PPM1K and C-terminal linker of the lipoyl domain of DBT/E2 (residues 145-160) are critical for this interaction whereas the lipoyl prosthetic group is dispensable. This interaction requires colocalization in mitochondria. PPM1K competes with BCKDK for binding to DBT; this interaction is modulated by branched-chain alpha-keto acids (BCKAs). At steady state, BCKDH holoenzyme preferentially binds BCKDK and BCKDHA is phosphorylated. In response to high levels of BCKAs, BCKDK is replaced by PPM1K leading to BCKDHA dephosphorylation. It depends on (R)-lipoate as a cofactor.

The protein resides in the mitochondrion matrix. It carries out the reaction N(6)-[(R)-dihydrolipoyl]-L-lysyl-[protein] + 2-methylpropanoyl-CoA = N(6)-[(R)-S(8)-2-methylpropanoyldihydrolipoyl]-L-lysyl-[protein] + CoA. Functionally, the branched-chain alpha-keto dehydrogenase complex catalyzes the overall conversion of alpha-keto acids to acyl-CoA and CO(2). It contains multiple copies of three enzymatic components: branched-chain alpha-keto acid decarboxylase (E1), lipoamide acyltransferase (E2) and lipoamide dehydrogenase (E3). Within this complex, the catalytic function of this enzyme is to accept, and to transfer to coenzyme A, acyl groups that are generated by the branched-chain alpha-keto acid decarboxylase component. The polypeptide is Lipoamide acyltransferase component of branched-chain alpha-keto acid dehydrogenase complex, mitochondrial (Dbt) (Mus musculus (Mouse)).